The sequence spans 78 residues: Neurotoxin 3FTx-LK (78 aa).

The first 21 residues, 1-21 (MKTLLLTLVVVTIVCLDLGYT), serve as a signal peptide directing secretion. Disulfide bonds link Cys24-Cys42, Cys35-Cys60, Cys64-Cys70, and Cys71-Cys76.

In terms of tissue distribution, expressed by the venom gland.

The protein localises to the secreted. Blocks both the muscle-twitch response to nerve stimulation and the response to exogenous acetylcholine. The protein is Neurotoxin 3FTx-LK of Bungarus fasciatus (Banded krait).